The primary structure comprises 224 residues: Superoxide dismutase [Mn], mitochondrial (224 aa).

Residues 1 to 20 (MLLARAFARRSLRAGLWCRQ) constitute a mitochondrion transit peptide. Mn(2+) contacts are provided by H46, H94, D177, and H181.

It belongs to the iron/manganese superoxide dismutase family. Homotetramer. Mn(2+) serves as cofactor.

Its subcellular location is the mitochondrion matrix. The catalysed reaction is 2 superoxide + 2 H(+) = H2O2 + O2. Its function is as follows. Destroys superoxide anion radicals which are normally produced within the cells and which are toxic to biological systems. This chain is Superoxide dismutase [Mn], mitochondrial, found in Charybdis feriata (Crucifix crab).